A 1132-amino-acid polypeptide reads, in one-letter code: Tyrosine-protein kinase JAK2 (1132 aa).

The interval 1-239 (MGMACLTMTE…RYRFRRFIQQ (239 aa)) is interaction with cytokine/interferon/growth hormone receptors. The FERM domain occupies 37–380 (PVLQVYLYHS…GYYRLTADAH (344 aa)). Tyr119 carries the phosphotyrosine; by autocatalysis modification. 2 positions are modified to phosphotyrosine: Tyr372 and Tyr373. Residues 401-482 (HGPISMDFAI…NLKDLLNCYQ (82 aa)) form the SH2; atypical domain. Position 523 is a phosphoserine (Ser523). Residues 545–809 (LIFNESLGQG…AVIRDLNSLF (265 aa)) enclose the Protein kinase 1 domain. Tyr570 and Tyr813 each carry phosphotyrosine. One can recognise a Protein kinase 2 domain in the interval 849 to 1124 (LKFLQQLGKG…SFRDLSLRVD (276 aa)). An ATP-binding site is contributed by 855-863 (LGKGNFGSV). A Phosphotyrosine; by autocatalysis modification is found at Tyr868. Lys882 is a binding site for ATP. Phosphotyrosine; by autocatalysis is present on residues Tyr966 and Tyr972. The active-site Proton acceptor is the Asp976. A phosphotyrosine; by autocatalysis mark is found at Tyr1007 and Tyr1008.

The protein belongs to the protein kinase superfamily. Tyr protein kinase family. JAK subfamily. As to quaternary structure, interacts with IL23R, SKB1 and STAM2. Interacts with EPOR. Interacts with LYN. Interacts with SIRPA. Interacts with SH2B1. Interacts with TEC. Interacts with IFNGR2 (via intracellular domain). Interacts with LEPR (Isoform B). Interacts with HSP90AB1; promotes functional activation in a heat shock-dependent manner. Interacts with STRA6. Interacts with ASB2; the interaction targets JAK2 for Notch-induced proteasomal degradation. Interacts with MPL/TPOR. The cofactor is Mg(2+). Autophosphorylated, leading to regulate its activity. Leptin promotes phosphorylation on tyrosine residues, including phosphorylation on Tyr-813. Autophosphorylation on Tyr-119 in response to EPO down-regulates its kinase activity. Autophosphorylation on Tyr-868, Tyr-966 and Tyr-972 in response to growth hormone (GH) are required for maximal kinase activity. Also phosphorylated by TEC. Phosphorylated on tyrosine residues in response to interferon gamma signaling. Phosphorylated on tyrosine residues in response to a signaling cascade that is activated by increased cellular retinol. In terms of processing, undergoes Notch-induced ubiquitination and subsequent proteasomal degradation which is mediated by ASB1 or ASB2, the substrate-recognition components of probable ECS E3 ubiquitin-protein ligase complexes. As to expression, ubiquitously expressed throughout most tissues.

The protein localises to the endomembrane system. Its subcellular location is the cytoplasm. It localises to the nucleus. It catalyses the reaction L-tyrosyl-[protein] + ATP = O-phospho-L-tyrosyl-[protein] + ADP + H(+). Its activity is regulated as follows. Regulated by autophosphorylation, can both activate or decrease activity. Heme regulates its activity by enhancing the phosphorylation on Tyr-1007 and Tyr-1008. Functionally, non-receptor tyrosine kinase involved in various processes such as cell growth, development, differentiation or histone modifications. Mediates essential signaling events in both innate and adaptive immunity. In the cytoplasm, plays a pivotal role in signal transduction via its association with type I receptors such as growth hormone (GHR), prolactin (PRLR), leptin (LEPR), erythropoietin (EPOR), thrombopoietin receptor (MPL/TPOR); or type II receptors including IFN-alpha, IFN-beta, IFN-gamma and multiple interleukins. Following ligand-binding to cell surface receptors, phosphorylates specific tyrosine residues on the cytoplasmic tails of the receptor, creating docking sites for STATs proteins. Subsequently, phosphorylates the STATs proteins once they are recruited to the receptor. Phosphorylated STATs then form homodimer or heterodimers and translocate to the nucleus to activate gene transcription. For example, cell stimulation with erythropoietin (EPO) during erythropoiesis leads to JAK2 autophosphorylation, activation, and its association with erythropoietin receptor (EPOR) that becomes phosphorylated in its cytoplasmic domain. Then, STAT5 (STAT5A or STAT5B) is recruited, phosphorylated and activated by JAK2. Once activated, dimerized STAT5 translocates into the nucleus and promotes the transcription of several essential genes involved in the modulation of erythropoiesis. Part of a signaling cascade that is activated by increased cellular retinol and that leads to the activation of STAT5 (STAT5A or STAT5B). In addition, JAK2 mediates angiotensin-2-induced ARHGEF1 phosphorylation. Plays a role in cell cycle by phosphorylating CDKN1B. Cooperates with TEC through reciprocal phosphorylation to mediate cytokine-driven activation of FOS transcription. In the nucleus, plays a key role in chromatin by specifically mediating phosphorylation of 'Tyr-41' of histone H3 (H3Y41ph), a specific tag that promotes exclusion of CBX5 (HP1 alpha) from chromatin. Up-regulates the potassium voltage-gated channel activity of KCNA3. In Mus musculus (Mouse), this protein is Tyrosine-protein kinase JAK2.